The primary structure comprises 282 residues: Bifunctional protein FolD (282 aa).

NADP(+) is bound by residues Gly164–Ser166, Ile189, and Ile230.

This sequence belongs to the tetrahydrofolate dehydrogenase/cyclohydrolase family. Homodimer.

The catalysed reaction is (6R)-5,10-methylene-5,6,7,8-tetrahydrofolate + NADP(+) = (6R)-5,10-methenyltetrahydrofolate + NADPH. The enzyme catalyses (6R)-5,10-methenyltetrahydrofolate + H2O = (6R)-10-formyltetrahydrofolate + H(+). It functions in the pathway one-carbon metabolism; tetrahydrofolate interconversion. Its function is as follows. Catalyzes the oxidation of 5,10-methylenetetrahydrofolate to 5,10-methenyltetrahydrofolate and then the hydrolysis of 5,10-methenyltetrahydrofolate to 10-formyltetrahydrofolate. This Campylobacter jejuni subsp. jejuni serotype O:2 (strain ATCC 700819 / NCTC 11168) protein is Bifunctional protein FolD.